A 1712-amino-acid chain; its full sequence is Neurexin-2 (1712 aa).

A signal peptide spans 1–28 (MASGSRWRPTPPPLLLLLLLALAARADG). The Laminin G-like 1 domain occupies 29 to 206 (LEFGGGPGQW…LRGATADPLC (178 aa)). Over 29–1636 (LEFGGGPGQW…EVIRESSSTT (1608 aa)) the chain is Extracellular. An N-linked (GlcNAc...) asparagine glycan is attached at Asn60. The region spanning 202–242 (ADPLCAPARNPCANGGLCTVLAPGEVGCDCSHTGFGGKFCS) is the EGF-like 1 domain. 3 disulfides stabilise this stretch: Cys206–Cys219, Cys213–Cys229, and Cys231–Cys241. 2 consecutive Laminin G-like domains span residues 289–486 (VATF…SFRC) and 493–686 (DPVT…APFC). Asp335 is a binding site for Ca(2+). A glycan (N-linked (GlcNAc...) asparagine) is linked at Asn338. Residues Leu352 and Met420 each coordinate Ca(2+). 5 disulfides stabilise this stretch: Cys450–Cys486, Cys657–Cys686, Cys694–Cys705, Cys699–Cys714, and Cys716–Cys726. Positions 690–727 (TLKQCASAPCRNGGVCREGWNRFICDCIGTGFLGRVCE) constitute an EGF-like 2 domain. Laminin G-like domains follow at residues 732 to 904 (VLSY…ITYC) and 918 to 1093 (DPVT…ERGC). Asp779 and Leu796 together coordinate Ca(2+). Asn841 carries N-linked (GlcNAc...) asparagine glycosylation. Arg854 provides a ligand contact to Ca(2+). Cystine bridges form between Cys1065/Cys1093, Cys1100/Cys1111, Cys1105/Cys1120, and Cys1122/Cys1132. An EGF-like 3 domain is found at 1096 to 1133 (PSTTCTEESCANQGVCLQQWDGFTCDCTMTSYGGPVCN). The Laminin G-like 6 domain occupies 1137 to 1345 (TTYIFGKGGA…HLRLVGEGPS (209 aa)). Ca(2+) contacts are provided by Asp1189 and Val1206. An N-linked (GlcNAc...) asparagine glycan is attached at Asn1236. Ca(2+) contacts are provided by Ile1288 and Asn1290. The tract at residues 1373–1392 (ATTTTRRGRSPTLRDSTTQN) is disordered. Residue Ser1400 is glycosylated (O-linked (Xyl...) (heparan sulfate) serine). Disordered stretches follow at residues 1458 to 1489 (ATQD…CEEP) and 1525 to 1626 (TLLS…PGAV). A helical transmembrane segment spans residues 1637–1657 (GMVVGIVAAAALCILILLYAM). At 1658–1712 (YKYRNRDEGSYQVDQSRNYISNSAQSNGAVVKEKAPAAPKTPSKAKKNKDKEYYV) the chain is on the cytoplasmic side. The disordered stretch occupies residues 1679–1712 (NSAQSNGAVVKEKAPAAPKTPSKAKKNKDKEYYV).

Belongs to the neurexin family. The laminin G-like domain 1 binds to NXPH1. Interacts with PATJ. Interacts with CBLN1, CBLN2 and, less avidly, with CBLN4. Specific isoforms bind neuroligins NLGN1, NLGN2 and NLGN3. Specific isoforms bind to alpha-dystroglycan. Interacts (via Laminin G-like 1 domain) with IGSF21 (Ig-like 1 domain) in a trans-interaction manner. Interacts with CLSTN3. In terms of processing, O-glycosylated; contains heparan sulfate. Heparan sulfate attachment is required for synapse development by mediating interactions with neuroligins. Predominantly expressed in brain.

The protein resides in the presynaptic cell membrane. In terms of biological role, neuronal cell surface protein that may be involved in cell recognition and cell adhesion. May mediate intracellular signaling. The polypeptide is Neurexin-2 (NRXN2) (Homo sapiens (Human)).